Here is a 299-residue protein sequence, read N- to C-terminus: MLSAGLGLLMLVAVVEFLIGLIGNGVLVVWSFREWIRKFSWSSYNLIILGLAGCRFVLQWLIILDLSLFPLFQSSRWLRYLSIFWVLVSQASLWFATFLSVFYCKKITTFDHPAYLWLKQRAYNLSLWCLLGYFIINLLLTVQIGLMFYHPPQGNSSIRYPFESWQYLYAFRLNSGSYLPLMVFLVSSGMLIVSLYTHHKKMKVHSAGRRDVRAKAHITALKSLGCFLLLHLVYIMASPFSIASKTYPPDLTSVFIWETLMAAYPSLHSLILIMGIPRVKQTCQKIXWKTVCARRCWGP.

M1 is a topological domain (extracellular). A helical membrane pass occupies residues L2–I22. Topologically, residues G23–N45 are cytoplasmic. The chain crosses the membrane as a helical span at residues L46 to L66. Residues S67 to S82 lie on the Extracellular side of the membrane. The helical transmembrane segment at I83–Y103 threads the bilayer. At C104 to L127 the chain is on the cytoplasmic side. A helical transmembrane segment spans residues W128 to F148. The Extracellular segment spans residues Y149–S175. N-linked (GlcNAc...) asparagine glycosylation occurs at N155. Residues G176–Y196 traverse the membrane as a helical segment. Over T197 to S223 the chain is Cytoplasmic. Residues L224 to S244 traverse the membrane as a helical segment. Topologically, residues K245–S253 are extracellular. Residues V254–M274 form a helical membrane-spanning segment. The Cytoplasmic portion of the chain corresponds to G275–P299.

It belongs to the G-protein coupled receptor T2R family.

The protein resides in the membrane. In terms of biological role, receptor that may play a role in the perception of bitterness and is gustducin-linked. May play a role in sensing the chemical composition of the gastrointestinal content. The activity of this receptor may stimulate alpha gustducin, mediate PLC-beta-2 activation and lead to the gating of TRPM5. This is Taste receptor type 2 member 5 (TAS2R5) from Pan troglodytes (Chimpanzee).